Consider the following 84-residue polypeptide: Cytochrome b559 subunit alpha (84 aa).

A helical transmembrane segment spans residues 22–36 (VIHSITIPALFVAGW). A heme-binding site is contributed by His24.

Belongs to the PsbE/PsbF family. As to quaternary structure, heterodimer of an alpha subunit and a beta subunit. PSII is composed of 1 copy each of membrane proteins PsbA, PsbB, PsbC, PsbD, PsbE, PsbF, PsbH, PsbI, PsbJ, PsbK, PsbL, PsbM, PsbT, PsbX, PsbY, PsbZ, Psb30/Ycf12, at least 3 peripheral proteins of the oxygen-evolving complex and a large number of cofactors. It forms dimeric complexes. It depends on heme b as a cofactor.

Its subcellular location is the plastid. The protein resides in the chloroplast thylakoid membrane. Its function is as follows. This b-type cytochrome is tightly associated with the reaction center of photosystem II (PSII). PSII is a light-driven water:plastoquinone oxidoreductase that uses light energy to abstract electrons from H(2)O, generating O(2) and a proton gradient subsequently used for ATP formation. It consists of a core antenna complex that captures photons, and an electron transfer chain that converts photonic excitation into a charge separation. The protein is Cytochrome b559 subunit alpha of Porphyra purpurea (Red seaweed).